A 473-amino-acid polypeptide reads, in one-letter code: Ribulose bisphosphate carboxylase large chain (473 aa).

Residue Lys8 is modified to N6,N6,N6-trimethyllysine. Residues Asn117 and Thr167 each contribute to the substrate site. The Proton acceptor role is filled by Lys169. Residue Lys171 coordinates substrate. Residues Lys195, Asp197, and Glu198 each coordinate Mg(2+). Lys195 carries the post-translational modification N6-carboxylysine. His288 (proton acceptor) is an active-site residue. Residues Arg289, His321, and Ser373 each contribute to the substrate site.

Belongs to the RuBisCO large chain family. Type I subfamily. As to quaternary structure, heterohexadecamer of 8 large chains and 8 small chains; disulfide-linked. The disulfide link is formed within the large subunit homodimers. It depends on Mg(2+) as a cofactor. The disulfide bond which can form in the large chain dimeric partners within the hexadecamer appears to be associated with oxidative stress and protein turnover.

Its subcellular location is the plastid. It localises to the chloroplast. The catalysed reaction is 2 (2R)-3-phosphoglycerate + 2 H(+) = D-ribulose 1,5-bisphosphate + CO2 + H2O. The enzyme catalyses D-ribulose 1,5-bisphosphate + O2 = 2-phosphoglycolate + (2R)-3-phosphoglycerate + 2 H(+). Functionally, ruBisCO catalyzes two reactions: the carboxylation of D-ribulose 1,5-bisphosphate, the primary event in carbon dioxide fixation, as well as the oxidative fragmentation of the pentose substrate in the photorespiration process. Both reactions occur simultaneously and in competition at the same active site. This is Ribulose bisphosphate carboxylase large chain from Amorphophallus titanum (Titan arum).